A 192-amino-acid polypeptide reads, in one-letter code: Probable nicotinate-nucleotide adenylyltransferase (192 aa).

The protein belongs to the NadD family.

It carries out the reaction nicotinate beta-D-ribonucleotide + ATP + H(+) = deamido-NAD(+) + diphosphate. It functions in the pathway cofactor biosynthesis; NAD(+) biosynthesis; deamido-NAD(+) from nicotinate D-ribonucleotide: step 1/1. Functionally, catalyzes the reversible adenylation of nicotinate mononucleotide (NaMN) to nicotinic acid adenine dinucleotide (NaAD). The sequence is that of Probable nicotinate-nucleotide adenylyltransferase from Rhizobium etli (strain CIAT 652).